We begin with the raw amino-acid sequence, 151 residues long: Protein SprT-like (151 aa).

One can recognise a SprT-like domain in the interval 6–147 (LQRMVENLSE…GHCNGKLRMK (142 aa)). Zn(2+) is bound at residue His-67. Glu-68 is an active-site residue. Position 71 (His-71) interacts with Zn(2+).

The protein belongs to the SprT family. The cofactor is Zn(2+).

It localises to the cytoplasm. The protein is Protein SprT-like of Staphylococcus aureus (strain Mu3 / ATCC 700698).